We begin with the raw amino-acid sequence, 356 residues long: Protein-glutamate methylesterase/protein-glutamine glutaminase 3 (356 aa).

A Response regulatory domain is found at 3–120; the sequence is KVAIVDDSAV…KGFLEESQAR (118 aa). At aspartate 54 the chain carries 4-aspartylphosphate. Residues 165–356 enclose the CheB-type methylesterase domain; the sequence is NQTTDRVVAL…AEEIIAFTKQ (192 aa). Residues serine 177, histidine 203, and aspartate 299 contribute to the active site.

The protein belongs to the CheB family. Phosphorylated by CheA. Phosphorylation of the N-terminal regulatory domain activates the methylesterase activity.

The protein localises to the cytoplasm. The enzyme catalyses [protein]-L-glutamate 5-O-methyl ester + H2O = L-glutamyl-[protein] + methanol + H(+). It carries out the reaction L-glutaminyl-[protein] + H2O = L-glutamyl-[protein] + NH4(+). Functionally, involved in chemotaxis. Part of a chemotaxis signal transduction system that modulates chemotaxis in response to various stimuli. Catalyzes the demethylation of specific methylglutamate residues introduced into the chemoreceptors (methyl-accepting chemotaxis proteins or MCP) by CheR. Also mediates the irreversible deamidation of specific glutamine residues to glutamic acid. The chain is Protein-glutamate methylesterase/protein-glutamine glutaminase 3 from Shewanella oneidensis (strain ATCC 700550 / JCM 31522 / CIP 106686 / LMG 19005 / NCIMB 14063 / MR-1).